The sequence spans 287 residues: ATP synthase gamma chain (287 aa).

This sequence belongs to the ATPase gamma chain family. As to quaternary structure, F-type ATPases have 2 components, CF(1) - the catalytic core - and CF(0) - the membrane proton channel. CF(1) has five subunits: alpha(3), beta(3), gamma(1), delta(1), epsilon(1). CF(0) has three main subunits: a, b and c.

The protein localises to the cell inner membrane. Produces ATP from ADP in the presence of a proton gradient across the membrane. The gamma chain is believed to be important in regulating ATPase activity and the flow of protons through the CF(0) complex. The protein is ATP synthase gamma chain of Pectobacterium carotovorum subsp. carotovorum (strain PC1).